The sequence spans 213 residues: Cytokinin riboside 5'-monophosphate phosphoribohydrolase LOG1 (213 aa).

Substrate-binding positions include Glu78, Arg96–Lys97, Gly113–Glu119, and Thr125.

The protein belongs to the LOG family. As to expression, expressed in roots and shoots. Detected in the vascular tissues of roots, cotyledons, leaves and pistils, in the shoot apical meristem and in immature flowers.

The protein resides in the cytoplasm. It is found in the nucleus. It catalyses the reaction N(6)-(dimethylallyl)adenosine 5'-phosphate + H2O = N(6)-dimethylallyladenine + D-ribose 5-phosphate. It carries out the reaction 9-ribosyl-trans-zeatin 5'-phosphate + H2O = trans-zeatin + D-ribose 5-phosphate. Its function is as follows. Cytokinin-activating enzyme working in the direct activation pathway. Phosphoribohydrolase that converts inactive cytokinin nucleotides to the biologically active free-base forms. This chain is Cytokinin riboside 5'-monophosphate phosphoribohydrolase LOG1 (LOG1), found in Arabidopsis thaliana (Mouse-ear cress).